The chain runs to 437 residues: MGNKPTISVSHLGCEKNRIDSEHMLGILAQQGYSIDANEELADYVIVNTCSFIQEAREESVRTLVELAEANKKIIISGCMAQHFQEQLLEELPEAVALVGTGDYQKIAEVIQRVETGERVTEVSQNPTFVADEMTPRYRTTNEAVAYLRVAEGCDYRCAFCIIPHLRGNQRSRSIESIVTEAQQLADQGVQEIILISQITTNYGLDLYGEPKLAELLRALGKVDIPWIRIHYAYPTGLTPKVIDAIRDTPNILPYLDLPLQHSHPAILKAMNRPWQGQVNDNIIERLKQSIPNAILRTTFIVGFPGETEEHFEHLINFVQRHEFDHVGVFTFSPEEETPAYQMPNQVPSEIAQARRNYLMEIQQPIAAKKNQKCVGQTVEVLIEQENPTTQEYIGRSIRFAPEVDGVVYVEGEGQLNSIIPVKITDADVYDLYGKVI.

One can recognise an MTTase N-terminal domain in the interval 5–116 (PTISVSHLGC…IAEVIQRVET (112 aa)). Positions 14, 50, 79, 154, 158, and 161 each coordinate [4Fe-4S] cluster. Positions 140 to 369 (TTNEAVAYLR…MEIQQPIAAK (230 aa)) constitute a Radical SAM core domain. The TRAM domain occupies 372-437 (QKCVGQTVEV…DVYDLYGKVI (66 aa)).

The protein belongs to the methylthiotransferase family. RimO subfamily. [4Fe-4S] cluster is required as a cofactor.

Its subcellular location is the cytoplasm. The catalysed reaction is L-aspartate(89)-[ribosomal protein uS12]-hydrogen + (sulfur carrier)-SH + AH2 + 2 S-adenosyl-L-methionine = 3-methylsulfanyl-L-aspartate(89)-[ribosomal protein uS12]-hydrogen + (sulfur carrier)-H + 5'-deoxyadenosine + L-methionine + A + S-adenosyl-L-homocysteine + 2 H(+). Functionally, catalyzes the methylthiolation of an aspartic acid residue of ribosomal protein uS12. In Crocosphaera subtropica (strain ATCC 51142 / BH68) (Cyanothece sp. (strain ATCC 51142)), this protein is Ribosomal protein uS12 methylthiotransferase RimO.